A 399-amino-acid polypeptide reads, in one-letter code: uncharacterized protein (399 aa).

This sequence belongs to the TelA family.

This is an uncharacterized protein from Listeria monocytogenes serovar 1/2a (strain ATCC BAA-679 / EGD-e).